The sequence spans 208 residues: ATP-dependent Clp protease proteolytic subunit (208 aa).

Serine 105 acts as the Nucleophile in catalysis. Histidine 130 is a catalytic residue.

It belongs to the peptidase S14 family. Fourteen ClpP subunits assemble into 2 heptameric rings which stack back to back to give a disk-like structure with a central cavity, resembling the structure of eukaryotic proteasomes.

Its subcellular location is the cytoplasm. The enzyme catalyses Hydrolysis of proteins to small peptides in the presence of ATP and magnesium. alpha-casein is the usual test substrate. In the absence of ATP, only oligopeptides shorter than five residues are hydrolyzed (such as succinyl-Leu-Tyr-|-NHMec, and Leu-Tyr-Leu-|-Tyr-Trp, in which cleavage of the -Tyr-|-Leu- and -Tyr-|-Trp bonds also occurs).. Cleaves peptides in various proteins in a process that requires ATP hydrolysis. Has a chymotrypsin-like activity. Plays a major role in the degradation of misfolded proteins. The sequence is that of ATP-dependent Clp protease proteolytic subunit from Xylella fastidiosa (strain M12).